The chain runs to 334 residues: Transcription initiation factor IIB (334 aa).

Residues 34–65 (TETVCPECGGRQLVHDYERAELVCQSCGLVID) form a TFIIB-type zinc finger. The Zn(2+) site is built by Cys-38, Cys-41, Cys-57, and Cys-60. 2 repeat units span residues 151 to 234 (SELD…SREL) and 245 to 326 (DYVP…ELAE).

This sequence belongs to the TFIIB family.

In terms of biological role, stabilizes TBP binding to an archaeal box-A promoter. Also responsible for recruiting RNA polymerase II to the pre-initiation complex (DNA-TBP-TFIIB). The sequence is that of Transcription initiation factor IIB from Methanoregula boonei (strain DSM 21154 / JCM 14090 / 6A8).